The chain runs to 942 residues: Isoleucine--tRNA ligase (942 aa).

The 'HIGH' region motif lies at 58–68 (PYANGDIHIGH). Glutamate 566 serves as a coordination point for L-isoleucyl-5'-AMP. Positions 607–611 (KMSKS) match the 'KMSKS' region motif. Residue lysine 610 participates in ATP binding. Positions 905, 908, 925, and 928 each coordinate Zn(2+).

The protein belongs to the class-I aminoacyl-tRNA synthetase family. IleS type 1 subfamily. As to quaternary structure, monomer. Zn(2+) is required as a cofactor.

Its subcellular location is the cytoplasm. The catalysed reaction is tRNA(Ile) + L-isoleucine + ATP = L-isoleucyl-tRNA(Ile) + AMP + diphosphate. Catalyzes the attachment of isoleucine to tRNA(Ile). As IleRS can inadvertently accommodate and process structurally similar amino acids such as valine, to avoid such errors it has two additional distinct tRNA(Ile)-dependent editing activities. One activity is designated as 'pretransfer' editing and involves the hydrolysis of activated Val-AMP. The other activity is designated 'posttransfer' editing and involves deacylation of mischarged Val-tRNA(Ile). This is Isoleucine--tRNA ligase from Vibrio campbellii (strain ATCC BAA-1116).